Reading from the N-terminus, the 90-residue chain is Small ribosomal subunit protein bS16 (90 aa).

Belongs to the bacterial ribosomal protein bS16 family.

In Streptococcus thermophilus (strain CNRZ 1066), this protein is Small ribosomal subunit protein bS16.